The following is an 829-amino-acid chain: Protein SEY1 (829 aa).

Residues 1-721 (MNQTPQIAQD…KRSMVSSVAQ (721 aa)) are Cytoplasmic-facing. The GB1/RHD3-type G domain maps to 87–310 (GFAYDVVAVF…REDYVFQPAY (224 aa)). 97–104 (GSQSTGKS) is a GTP binding site. Residues 487 to 525 (EYEHELALLDEDLKLIADKCRADETKKMVNAIERNVKRQ) are a coiled coil. Residues 722-742 (IPVWMYGVLVVLGWNEAMAVL) traverse the membrane as a helical segment. At 743–745 (FNP) the chain is on the lumenal side. Residues 746–766 (LYFAMLLVLAASGYIILQLGL) form a helical membrane-spanning segment. The Cytoplasmic segment spans residues 767-829 (AGPILQIAST…DLIKGEMLEK (63 aa)). A disordered region spans residues 806–829 (PVTASSSDEQERKGDLIKGEMLEK). The segment covering 814-829 (EQERKGDLIKGEMLEK) has biased composition (basic and acidic residues).

Belongs to the TRAFAC class dynamin-like GTPase superfamily. GB1/RHD3 GTPase family. RHD3 subfamily.

Its subcellular location is the endoplasmic reticulum membrane. Functionally, cooperates with the reticulon proteins and tubule-shaping DP1 family proteins to generate and maintain the structure of the tubular endoplasmic reticulum network. Has GTPase activity, which is required for its function in ER organization. In Cryptococcus neoformans var. neoformans serotype D (strain B-3501A) (Filobasidiella neoformans), this protein is Protein SEY1.